The sequence spans 132 residues: MVMTDPIADFLTRIRNANQAKHEVLEVPASNIKKGIAEILKREGFVKNVEIIEDDKQGVIRVFLKYGSNGEKVITNLKRVSKPGLRVYKKREDLPKVLNGLGIAILSTSEGLLTDKEARQKNVGGEVIAYVW.

It belongs to the universal ribosomal protein uS8 family. As to quaternary structure, part of the 30S ribosomal subunit. Contacts proteins S5 and S12.

Its function is as follows. One of the primary rRNA binding proteins, it binds directly to 16S rRNA central domain where it helps coordinate assembly of the platform of the 30S subunit. The protein is Small ribosomal subunit protein uS8 of Streptococcus pneumoniae serotype 19F (strain G54).